Consider the following 112-residue polypeptide: MSDTAVDASVEKSTKDLKAKEKEVVEEAENGKDKPTNGNAENEENGEQEGDNEVDEEEEVDEEDEEDDVEGDDDEVDDDDEVEGATGKRAAEDDEDDDDDVETKKQKTDEDD.

The interval 1–112 (MSDTAVDASV…TKKQKTDEDD (112 aa)) is disordered. Basic and acidic residues predominate over residues 9–35 (SVEKSTKDLKAKEKEVVEEAENGKDKP). 2 stretches are compositionally biased toward acidic residues: residues 41 to 83 (ENEE…DEVE) and 92 to 101 (EDDEDDDDDV). Residues 102–112 (ETKKQKTDEDD) show a composition bias toward basic and acidic residues.

Belongs to the pro/parathymosin family.

The protein resides in the nucleus. In Xenopus laevis (African clawed frog), this protein is Prothymosin alpha-B (ptma-b).